Reading from the N-terminus, the 1177-residue chain is DNA-directed RNA polymerase subunit beta (1177 aa).

Positions D1147–D1161 are enriched in acidic residues. The tract at residues D1147 to E1177 is disordered. Residues H1162–E1177 show a composition bias toward basic and acidic residues.

Belongs to the RNA polymerase beta chain family. The RNAP catalytic core consists of 2 alpha, 1 beta, 1 beta' and 1 omega subunit. When a sigma factor is associated with the core the holoenzyme is formed, which can initiate transcription.

It carries out the reaction RNA(n) + a ribonucleoside 5'-triphosphate = RNA(n+1) + diphosphate. Its function is as follows. DNA-dependent RNA polymerase catalyzes the transcription of DNA into RNA using the four ribonucleoside triphosphates as substrates. This Bacillus anthracis (strain A0248) protein is DNA-directed RNA polymerase subunit beta.